The primary structure comprises 212 residues: Leucine efflux protein (212 aa).

The next 6 helical transmembrane spans lie at 12 to 32 (TYLVGAIFIVLVPGPNTLFVL), 49 to 69 (GVFIGDAVLMFLAWAGVATLI), 71 to 91 (TTPILFNIVRYLGAFYLLYLG), 122 to 142 (ILSLTNPKAILFYVSFFVQFI), 153 to 173 (FFILAATLELVSFCYLSFLII), and 188 to 208 (LAKVGNSLIGLMFVGFAARLA).

It belongs to the Rht family.

Its subcellular location is the cell inner membrane. It carries out the reaction L-leucine(in) + H(+)(out) = L-leucine(out) + H(+)(in). Leucine export is inhibited by the proton ionophore carbonyl cyanide m-chlorophenylhydrazone (CCCP). Its function is as follows. Exporter of leucine. Can also transport its natural analog L-alpha-amino-n-butyric acid and some other structurally unrelated amino acids. Leucine excretion is probably driven by proton motive force. The polypeptide is Leucine efflux protein (Escherichia coli (strain K12)).